We begin with the raw amino-acid sequence, 392 residues long: GTPase Obg (392 aa).

Positions 1–159 constitute an Obg domain; it reads MKFVDEATIL…RDLQLELMLL (159 aa). Residues 127–146 form a disordered region; that stretch reads NTRFKSSVNRTPRQKTMGTP. The segment covering 129–143 has biased composition (polar residues); the sequence is RFKSSVNRTPRQKTM. The 174-residue stretch at 160-333 folds into the OBG-type G domain; that stretch reads ADVGMLGLPN…LCWDVMAFIK (174 aa). GTP contacts are provided by residues 166–173, 191–195, 213–216, 283–286, and 314–316; these read GLPNAGKS, FTTLV, DIPG, NKVD, and SAA. The Mg(2+) site is built by Ser173 and Thr193. Positions 360–392 are disordered; it reads QLEEAQPEVEEDDDWDDDWDEDDEEGVETIYQR. Positions 364 to 386 are enriched in acidic residues; it reads AQPEVEEDDDWDDDWDEDDEEGV.

Belongs to the TRAFAC class OBG-HflX-like GTPase superfamily. OBG GTPase family. As to quaternary structure, monomer. The cofactor is Mg(2+).

It is found in the cytoplasm. Functionally, an essential GTPase which binds GTP, GDP and possibly (p)ppGpp with moderate affinity, with high nucleotide exchange rates and a fairly low GTP hydrolysis rate. Plays a role in control of the cell cycle, stress response, ribosome biogenesis and in those bacteria that undergo differentiation, in morphogenesis control. This Erwinia tasmaniensis (strain DSM 17950 / CFBP 7177 / CIP 109463 / NCPPB 4357 / Et1/99) protein is GTPase Obg.